The following is a 292-amino-acid chain: D-galactarolactone isomerase (292 aa).

It belongs to the metallo-dependent hydrolases superfamily. Does not require a metal cofactor. serves as cofactor.

It catalyses the reaction D-galactaro-1,5-lactone = D-galactaro-1,4-lactone. Its pathway is carbohydrate acid metabolism; D-galacturonate degradation via prokaryotic oxidative pathway. Functionally, catalyzes the isomerization of D-galactaro-1,5-lactone to D-galactaro-1,4-lactone. This is a step in the oxidative degradation pathway of D-galacturonate, which allows A.tumefaciens to utilize D-galacturonate as a sole carbon source. This is D-galactarolactone isomerase from Agrobacterium fabrum (strain C58 / ATCC 33970) (Agrobacterium tumefaciens (strain C58)).